Here is a 442-residue protein sequence, read N- to C-terminus: Shufflon protein B (442 aa).

Residues 1–361 (MKKYDRGWAS…TGAILSCQSG (361 aa)) form a constant region region. Positions 362 to 442 (TWKSSSASIW…SYFMKITCLK (81 aa)) are variable region.

The protein is Shufflon protein B of Escherichia coli.